A 546-amino-acid chain; its full sequence is uncharacterized protein (546 aa).

Belongs to the IIV-6 098R family.

This is an uncharacterized protein from Aedes vexans (Inland floodwater mosquito).